A 508-amino-acid chain; its full sequence is Probable polyol transporter 3 (508 aa).

Helical transmembrane passes span 21 to 41 (FAFG…YDTG), 60 to 80 (QIEV…LTAG), 90 to 110 (YTIA…GYGP), 120 to 140 (CIAG…SAEI), 147 to 167 (GFLT…GYVS), 178 to 198 (LGWR…AFGI), 280 to 300 (ILIA…EAVV), 318 to 338 (LLLA…IATF), 348 to 368 (LLLT…VSLT), 384 to 404 (IVST…ITWV), 418 to 438 (GASI…MSFL), and 448 to 468 (GVFF…FFML).

The protein belongs to the major facilitator superfamily. Sugar transporter (TC 2.A.1.1) family.

The protein resides in the membrane. In terms of biological role, plasma membrane sugar-proton symporter. This Arabidopsis thaliana (Mouse-ear cress) protein is Probable polyol transporter 3 (PLT3).